We begin with the raw amino-acid sequence, 385 residues long: Na(+)/H(+) antiporter NhaA (385 aa).

11 consecutive transmembrane segments (helical) span residues 9–29 (YSAI…NVLD), 45–65 (IFGL…VFFF), 87–107 (IIPG…YLSV), 114–134 (GWPV…AIFG), 155–175 (AGIV…WIIV), 198–218 (TFLI…SVYQ), 220–235 (GIHA…IMLN), 245–265 (ALEP…AAMV), 282–302 (ILLG…IIAL), 312–332 (FFNL…SLLM), and 345–365 (QGVI…IILM).

It belongs to the NhaA Na(+)/H(+) (TC 2.A.33) antiporter family.

The protein resides in the cell membrane. It carries out the reaction Na(+)(in) + 2 H(+)(out) = Na(+)(out) + 2 H(+)(in). Its function is as follows. Na(+)/H(+) antiporter that extrudes sodium in exchange for external protons. This is Na(+)/H(+) antiporter NhaA from Tropheryma whipplei (strain Twist) (Whipple's bacillus).